The primary structure comprises 81 residues: Exodeoxyribonuclease 7 small subunit (81 aa).

Belongs to the XseB family. Heterooligomer composed of large and small subunits.

It is found in the cytoplasm. It catalyses the reaction Exonucleolytic cleavage in either 5'- to 3'- or 3'- to 5'-direction to yield nucleoside 5'-phosphates.. Bidirectionally degrades single-stranded DNA into large acid-insoluble oligonucleotides, which are then degraded further into small acid-soluble oligonucleotides. The polypeptide is Exodeoxyribonuclease 7 small subunit (Pseudomonas syringae pv. syringae (strain B728a)).